We begin with the raw amino-acid sequence, 398 residues long: Membrane-spanning 4-domains subfamily A member 18 (398 aa).

4 consecutive transmembrane segments (helical) span residues 156–176 (LGAI…NPVL), 178–198 (YYPF…SYIV), 218–238 (SISF…IIIT), and 251–271 (AVSG…CVVS). Positions 316-346 (TGPVSATNGPVNTTIHPVNTTTSPVNTTTSP) are disordered. Polar residues predominate over residues 319-331 (VSATNGPVNTTIH). Residues 332-346 (PVNTTTSPVNTTTSP) show a composition bias toward low complexity.

The protein belongs to the MS4A family.

The protein localises to the membrane. This is Membrane-spanning 4-domains subfamily A member 18 (MS4A18) from Homo sapiens (Human).